A 267-amino-acid chain; its full sequence is Phosphatidylserine decarboxylase proenzyme (267 aa).

Residues Asp-78, His-132, and Ser-236 each act as charge relay system; for autoendoproteolytic cleavage activity in the active site. Ser-236 (schiff-base intermediate with substrate; via pyruvic acid; for decarboxylase activity) is an active-site residue. Ser-236 bears the Pyruvic acid (Ser); by autocatalysis mark.

It belongs to the phosphatidylserine decarboxylase family. PSD-B subfamily. Prokaryotic type I sub-subfamily. As to quaternary structure, heterodimer of a large membrane-associated beta subunit and a small pyruvoyl-containing alpha subunit. Pyruvate is required as a cofactor. Is synthesized initially as an inactive proenzyme. Formation of the active enzyme involves a self-maturation process in which the active site pyruvoyl group is generated from an internal serine residue via an autocatalytic post-translational modification. Two non-identical subunits are generated from the proenzyme in this reaction, and the pyruvate is formed at the N-terminus of the alpha chain, which is derived from the carboxyl end of the proenzyme. The autoendoproteolytic cleavage occurs by a canonical serine protease mechanism, in which the side chain hydroxyl group of the serine supplies its oxygen atom to form the C-terminus of the beta chain, while the remainder of the serine residue undergoes an oxidative deamination to produce ammonia and the pyruvoyl prosthetic group on the alpha chain. During this reaction, the Ser that is part of the protease active site of the proenzyme becomes the pyruvoyl prosthetic group, which constitutes an essential element of the active site of the mature decarboxylase.

The protein resides in the cell membrane. It carries out the reaction a 1,2-diacyl-sn-glycero-3-phospho-L-serine + H(+) = a 1,2-diacyl-sn-glycero-3-phosphoethanolamine + CO2. It participates in phospholipid metabolism; phosphatidylethanolamine biosynthesis; phosphatidylethanolamine from CDP-diacylglycerol: step 2/2. Catalyzes the formation of phosphatidylethanolamine (PtdEtn) from phosphatidylserine (PtdSer). The polypeptide is Phosphatidylserine decarboxylase proenzyme (Helicobacter pylori (strain J99 / ATCC 700824) (Campylobacter pylori J99)).